Reading from the N-terminus, the 336-residue chain is Palmitoyltransferase PFA3 (336 aa).

The Cytoplasmic portion of the chain corresponds to 1–6 (MNDRLS). The helical transmembrane segment at 7 to 29 (LTSLFPRCLTTCLYIWTAYITLT) threads the bilayer. Residues 30–37 (RIHQIPRW) lie on the Vacuolar side of the membrane. A helical transmembrane segment spans residues 38–58 (FLALTIVPTLAVALYTYYKVI). Residues 59–147 (ARGPGSPLDF…AECTGFRNQK (89 aa)) lie on the Cytoplasmic side of the membrane. One can recognise a DHHC domain in the interval 104–154 (RVCQVCHVWKPDRCHHCSSCDVCILKMDHHCPWFAECTGFRNQKFFIQFLM). A helical membrane pass occupies residues 148-168 (FFIQFLMYTTLYAFLVLIYTC). Residues 169–188 (YELGTWFNSGSFNRELIDFH) lie on the Vacuolar side of the membrane. Residues 189 to 209 (LLGVALLAVAVFISVLAFTCF) form a helical membrane-spanning segment. Over 210-336 (SIYQVCKNQT…RASVEIIDAN (127 aa)) the chain is Cytoplasmic.

This sequence belongs to the DHHC palmitoyltransferase family. PFA3 subfamily. In terms of processing, autopalmitoylated.

The protein localises to the vacuole membrane. The catalysed reaction is L-cysteinyl-[protein] + hexadecanoyl-CoA = S-hexadecanoyl-L-cysteinyl-[protein] + CoA. Functionally, palmitoyltransferase specific for VAC8. Palmitoylates VAC8 at one or more of its N-terminal cysteine residues, which is required for its proper membrane localization. This Saccharomyces cerevisiae (strain ATCC 204508 / S288c) (Baker's yeast) protein is Palmitoyltransferase PFA3 (PFA3).